Consider the following 526-residue polypeptide: Thymocyte selection-associated high mobility group box protein TOX (526 aa).

Disordered regions lie at residues 138–178 and 192–264; these read MPDI…PHGQ and GLNM…PQKP. Residues 192–203 show a composition bias toward polar residues; sequence GLNMGGSNVPHN. Positions 209–220 are enriched in low complexity; that stretch reads GSKSATPSPSSS. The segment covering 228 to 245 has biased composition (basic and acidic residues); that stretch reads DTSKINGGEKRPASDMGK. A Nuclear localization signal motif is present at residues 237-256; the sequence is KRPASDMGKKPKTPKKKKKK. The span at 246–256 shows a compositional bias: basic residues; that stretch reads KPKTPKKKKKK. The segment at residues 261–329 is a DNA-binding region (HMG box); it reads PQKPVSAYAL…EYLKQLAAYR (69 aa).

It belongs to the high motility group (HMG) box superfamily. In terms of assembly, interacts with HBO1 complex composed at least of KAT7/HBO1, ING4, MEAF6, and JADE2; this complex is involved in histone acetylation. Interacts with DNMT1, LEO1, PAF1, SAP130 and SIN3A; these interactors regulate chromatin remodeling. Interacts with an array of proteins involved in RNA processing and translation and DNA replication. In terms of tissue distribution, expressed in NK cells. Highly expressed in tumor-infiltrating CD8-positive T cells (at protein level).

It is found in the nucleus. Transcriptional regulator with a major role in neural stem cell commitment and corticogenesis as well as in lymphoid cell development and lymphoid tissue organogenesis. Binds to GC-rich DNA sequences in the proximity of transcription start sites and may alter chromatin structure, modifying access of transcription factors to DNA. During cortical development, controls the neural stem cell pool by inhibiting the switch from proliferative to differentiating progenitors. Beyond progenitor cells, promotes neurite outgrowth in newborn neurons migrating to reach the cortical plate. May activate or repress critical genes for neural stem cell fate such as SOX2, EOMES and ROBO2. Plays an essential role in the development of lymphoid tissue-inducer (LTi) cells, a subset necessary for the formation of secondary lymphoid organs: peripheral lymph nodes and Peyer's patches. Acts as a developmental checkpoint and regulates thymocyte positive selection toward T cell lineage commitment. Required for the development of various T cell subsets, including CD4-positive helper T cells, CD8-positive cytotoxic T cells, regulatory T cells and CD1D-dependent natural killer T (NKT) cells. Required for the differentiation of common lymphoid progenitors (CMP) to innate lymphoid cells (ILC). May regulate the NOTCH-mediated gene program, promoting differentiation of the ILC lineage. Required at the progenitor phase of NK cell development in the bone marrow to specify NK cell lineage commitment. Upon chronic antigen stimulation, diverts T cell development by promoting the generation of exhaustive T cells, while suppressing effector and memory T cell programming. May regulate the expression of genes encoding inhibitory receptors such as PDCD1 and induce the exhaustion program, to prevent the overstimulation of T cells and activation-induced cell death. In Homo sapiens (Human), this protein is Thymocyte selection-associated high mobility group box protein TOX.